A 119-amino-acid polypeptide reads, in one-letter code: Large ribosomal subunit protein uL18 (119 aa).

A disordered region spans residues 1-20 (MSQIDKAARRQKIKARSRAT). Residues 9–19 (RRQKIKARSRA) show a composition bias toward basic residues.

Belongs to the universal ribosomal protein uL18 family. Part of the 50S ribosomal subunit; part of the 5S rRNA/L5/L18/L25 subcomplex. Contacts the 5S and 23S rRNAs.

Its function is as follows. This is one of the proteins that bind and probably mediate the attachment of the 5S RNA into the large ribosomal subunit, where it forms part of the central protuberance. This chain is Large ribosomal subunit protein uL18, found in Chlorobaculum parvum (strain DSM 263 / NCIMB 8327) (Chlorobium vibrioforme subsp. thiosulfatophilum).